The chain runs to 142 residues: Peptide methionine sulfoxide reductase MsrB (142 aa).

Residues 2-125 (LKKDKSELTD…NSAAIQFIPY (124 aa)) enclose the MsrB domain. Cys114 serves as the catalytic Nucleophile.

It belongs to the MsrB Met sulfoxide reductase family.

The enzyme catalyses L-methionyl-[protein] + [thioredoxin]-disulfide + H2O = L-methionyl-(R)-S-oxide-[protein] + [thioredoxin]-dithiol. This Staphylococcus aureus (strain Mu3 / ATCC 700698) protein is Peptide methionine sulfoxide reductase MsrB.